A 129-amino-acid chain; its full sequence is D-ribose pyranase (129 aa).

The active-site Proton donor is His-20. Substrate contacts are provided by residues Asp-28, His-96, and Tyr-118–Asn-120.

The protein belongs to the RbsD / FucU family. RbsD subfamily. Homodecamer.

The protein localises to the cytoplasm. The enzyme catalyses beta-D-ribopyranose = beta-D-ribofuranose. It participates in carbohydrate metabolism; D-ribose degradation; D-ribose 5-phosphate from beta-D-ribopyranose: step 1/2. Catalyzes the interconversion of beta-pyran and beta-furan forms of D-ribose. This is D-ribose pyranase from Exiguobacterium sp. (strain ATCC BAA-1283 / AT1b).